Here is a 495-residue protein sequence, read N- to C-terminus: Ectonucleoside triphosphate diphosphohydrolase 2 (495 aa).

Topologically, residues 2-4 are cytoplasmic; it reads ARR. Residues 5–25 form a helical membrane-spanning segment; that stretch reads AAAVLLLLALGCLLGILLLCL. Over 26–465 the chain is Extracellular; sequence GSGDARGPPS…SHRSMLYNYW (440 aa). Asparagine 62 carries an N-linked (GlcNAc...) asparagine glycan. An intrachain disulfide couples cysteine 73 to cysteine 97. Glutamate 162 functions as the Proton acceptor in the catalytic mechanism. 201–205 serves as a coordination point for ATP; it reads GASTQ. Disulfide bonds link cysteine 239–cysteine 286, cysteine 267–cysteine 311, cysteine 324–cysteine 329, and cysteine 378–cysteine 400. Asparagine 297 carries N-linked (GlcNAc...) asparagine glycosylation. N-linked (GlcNAc...) asparagine glycans are attached at residues asparagine 418 and asparagine 444. A helical transmembrane segment spans residues 466–486; it reads VILILLFVITTLTALLTAVYL. The Cytoplasmic portion of the chain corresponds to 487–495; sequence LRRSKSSTI.

It belongs to the GDA1/CD39 NTPase family. It depends on Ca(2+) as a cofactor. Requires Mg(2+) as cofactor.

It localises to the membrane. Functionally, in the nervous system, could hydrolyze ATP and other nucleotides to regulate purinergic neurotransmission. Hydrolyzes ADP only to a marginal extent. The polypeptide is Ectonucleoside triphosphate diphosphohydrolase 2 (ENTPD2) (Gallus gallus (Chicken)).